The chain runs to 658 residues: Structure-specific endonuclease subunit SLX4 (658 aa).

3 disordered regions span residues 17–37 (VDSDSPMQEQDELPMTQIPGD), 74–123 (GATE…KSIT), and 327–383 (QPGV…QVLQ). Composition is skewed to low complexity over residues 75–90 (ATESAPPSRAATPPAK) and 99–108 (KAAGRTSTGT). Residues 365 to 374 (FPKSPTSTPE) show a composition bias toward polar residues.

It belongs to the SLX4 family. In terms of assembly, forms a heterodimer with SLX1. In terms of processing, phosphorylated in response to DNA damage.

It localises to the nucleus. Functionally, regulatory subunit of the SLX1-SLX4 structure-specific endonuclease that resolves DNA secondary structures generated during DNA repair and recombination. Has endonuclease activity towards branched DNA substrates, introducing single-strand cuts in duplex DNA close to junctions with ss-DNA. The chain is Structure-specific endonuclease subunit SLX4 from Lachancea thermotolerans (strain ATCC 56472 / CBS 6340 / NRRL Y-8284) (Yeast).